Reading from the N-terminus, the 130-residue chain is Large ribosomal subunit protein bL17 (130 aa).

It belongs to the bacterial ribosomal protein bL17 family. As to quaternary structure, part of the 50S ribosomal subunit. Contacts protein L32.

The chain is Large ribosomal subunit protein bL17 from Shewanella loihica (strain ATCC BAA-1088 / PV-4).